Consider the following 523-residue polypeptide: Cytidine and dCMP deaminase domain-containing protein 1 (523 aa).

Positions 1 to 11 are enriched in polar residues; that stretch reads MKETDQMQSLE. 2 disordered regions span residues 1–27 and 55–81; these read MKET…GSMT and QGQK…RVST. Residues 71-169 form the CMP/dCMP-type deaminase 1 domain; that stretch reads GDNEELTRVS…SLLTEASSSE (99 aa). Histidine 110, cysteine 135, and cysteine 138 together coordinate Zn(2+). The short motif at 272–284 is the Nuclear export signal element; the sequence is NLRQNMKDLILLL. The 166-residue stretch at 318–483 folds into the CMP/dCMP-type deaminase 2 domain; sequence EVARHCMVQA…LNPSEAYSLD (166 aa). Histidine 399 contributes to the Zn(2+) binding site. Catalysis depends on glutamate 401, which acts as the Proton donor. Zn(2+) contacts are provided by cysteine 427 and cysteine 430. Residues 478–523 are disordered; sequence EAYSLDPNEPERRENGVLRRRSAKDEQRSSKRPRLETRSAGRATLQ. Over residues 486–516 the composition is skewed to basic and acidic residues; the sequence is EPERRENGVLRRRSAKDEQRSSKRPRLETRS. The Bipartite nuclear localization signal signature appears at 489-511; it reads RRENGVLRRRSAKDEQRSSKRPR.

The protein belongs to the cytidine and deoxycytidylate deaminase family. Zn(2+) serves as cofactor.

The protein resides in the cytoplasm. It is found in the nucleus. It catalyses the reaction 2'-deoxycytidine + H2O + H(+) = 2'-deoxyuridine + NH4(+). The catalysed reaction is cytidine + H2O + H(+) = uridine + NH4(+). Functionally, catalyzes the deamination of cytidine and deoxycytidine into uridine and deoxyuridine, respectively. May play an important role in testicular development and spermatogenesis. This is Cytidine and dCMP deaminase domain-containing protein 1 (Cdadc1) from Mus musculus (Mouse).